The following is a 203-amino-acid chain: MRGKFITFEGIDGAGKSTHIGAVAARLRERKDIPAVVTTREPGGTPLGEDLRQILLHRKMHLETEALLMFAARREHIAEVIEPALARGDWVISDRFTDATFAYQGGGRGLATSRLETLETWVQDGLQPDLTLLFDVPLETASERLAGAREPDKFEAESRAFFERTRAEYLRRAAQAPERFRVIDATQSIEAIRVELEKIISTL.

An ATP-binding site is contributed by 10 to 17 (GIDGAGKS).

This sequence belongs to the thymidylate kinase family.

It carries out the reaction dTMP + ATP = dTDP + ADP. Functionally, phosphorylation of dTMP to form dTDP in both de novo and salvage pathways of dTTP synthesis. The protein is Thymidylate kinase of Cupriavidus pinatubonensis (strain JMP 134 / LMG 1197) (Cupriavidus necator (strain JMP 134)).